Reading from the N-terminus, the 1204-residue chain is ATP-dependent helicase/nuclease subunit A (1204 aa).

The region spanning 2 to 472 (PQFTKEQEKA…ILLSDNFRST (471 aa)) is the UvrD-like helicase ATP-binding domain. ATP is bound at residue 23 to 30 (ASAGSGKT). The region spanning 500 to 783 (GQLIFGAKYY…RLMTIHGSKG (284 aa)) is the UvrD-like helicase C-terminal domain.

It belongs to the helicase family. AddA subfamily. Heterodimer of AddA and AddB/RexB. Mg(2+) is required as a cofactor.

The enzyme catalyses Couples ATP hydrolysis with the unwinding of duplex DNA by translocating in the 3'-5' direction.. It carries out the reaction ATP + H2O = ADP + phosphate + H(+). Its function is as follows. The heterodimer acts as both an ATP-dependent DNA helicase and an ATP-dependent, dual-direction single-stranded exonuclease. Recognizes the chi site generating a DNA molecule suitable for the initiation of homologous recombination. The AddA nuclease domain is required for chi fragment generation; this subunit has the helicase and 3' -&gt; 5' nuclease activities. In Lactobacillus helveticus (strain DPC 4571), this protein is ATP-dependent helicase/nuclease subunit A.